We begin with the raw amino-acid sequence, 203 residues long: Small ribosomal subunit protein uS4 (203 aa).

The S4 RNA-binding domain maps to 93 to 153; sequence QRLDSLVYRL…DKSKNIVPIQ (61 aa).

Belongs to the universal ribosomal protein uS4 family. Part of the 30S ribosomal subunit. Contacts protein S5. The interaction surface between S4 and S5 is involved in control of translational fidelity.

Its function is as follows. One of the primary rRNA binding proteins, it binds directly to 16S rRNA where it nucleates assembly of the body of the 30S subunit. In terms of biological role, with S5 and S12 plays an important role in translational accuracy. This Leuconostoc citreum (strain KM20) protein is Small ribosomal subunit protein uS4.